Consider the following 128-residue polypeptide: Fluoride-specific ion channel FluC (128 aa).

The next 4 membrane-spanning stretches (helical) occupy residues 4-24 (VMGI…RYAI), 37-57 (FGTF…WSFF), 65-85 (TFRL…STFS), and 101-121 (FGYL…GFFI). Na(+) contacts are provided by Gly-76 and Thr-79.

It belongs to the fluoride channel Fluc/FEX (TC 1.A.43) family.

The protein resides in the cell inner membrane. It catalyses the reaction fluoride(in) = fluoride(out). With respect to regulation, na(+) is not transported, but it plays an essential structural role and its presence is essential for fluoride channel function. Fluoride-specific ion channel. Important for reducing fluoride concentration in the cell, thus reducing its toxicity. The sequence is that of Fluoride-specific ion channel FluC from Desulfotalea psychrophila (strain LSv54 / DSM 12343).